Reading from the N-terminus, the 108-residue chain is Tubulin-specific chaperone A (108 aa).

Ala-2 is modified (N-acetylalanine).

The protein belongs to the TBCA family. In terms of assembly, supercomplex made of cofactors A to E. Cofactors A and D function by capturing and stabilizing tubulin in a quasi-native conformation. Cofactor E binds to the cofactor D-tubulin complex; interaction with cofactor C then causes the release of tubulin polypeptides that are committed to the native state.

Its subcellular location is the cytoplasm. It localises to the cytoskeleton. Functionally, tubulin-folding protein; involved in the early step of the tubulin folding pathway. This is Tubulin-specific chaperone A (TBCA) from Oryctolagus cuniculus (Rabbit).